The following is a 156-amino-acid chain: Ribosomal RNA large subunit methyltransferase H (156 aa).

S-adenosyl-L-methionine-binding positions include Leu72, Gly104, and 123–128; that span reads LGKMVW.

Belongs to the RNA methyltransferase RlmH family. Homodimer.

It localises to the cytoplasm. The catalysed reaction is pseudouridine(1915) in 23S rRNA + S-adenosyl-L-methionine = N(3)-methylpseudouridine(1915) in 23S rRNA + S-adenosyl-L-homocysteine + H(+). In terms of biological role, specifically methylates the pseudouridine at position 1915 (m3Psi1915) in 23S rRNA. The protein is Ribosomal RNA large subunit methyltransferase H of Roseobacter denitrificans (strain ATCC 33942 / OCh 114) (Erythrobacter sp. (strain OCh 114)).